The chain runs to 549 residues: Glutamyl-tRNA(Gln) amidotransferase subunit B, mitochondrial (549 aa).

The transit peptide at Met-1 to Tyr-23 directs the protein to the mitochondrion.

This sequence belongs to the GatB/GatE family. GatB subfamily. Subunit of the heterotrimeric GatFAB amidotransferase (AdT) complex, composed of A, B and F subunits.

It localises to the mitochondrion. The enzyme catalyses L-glutamyl-tRNA(Gln) + L-glutamine + ATP + H2O = L-glutaminyl-tRNA(Gln) + L-glutamate + ADP + phosphate + H(+). Allows the formation of correctly charged Gln-tRNA(Gln) through the transamidation of misacylated Glu-tRNA(Gln) in the mitochondria. The reaction takes place in the presence of glutamine and ATP through an activated gamma-phospho-Glu-tRNA(Gln). This chain is Glutamyl-tRNA(Gln) amidotransferase subunit B, mitochondrial, found in Yarrowia lipolytica (strain CLIB 122 / E 150) (Yeast).